A 567-amino-acid polypeptide reads, in one-letter code: MANAPVQRMSKLMAKTLRDDPADAEVLSHKLLVRAGYVRRTAAGLWSWLPLGKKVLGNIERIVREEMDAIGAQEVQLPALLPREPYEATGRWQEYGPELFRLQDRKGGDYLLGPTHEEIFTLLVKDQASSYKDLPVILYQIQNKYRDEARPRAGILRGREFLMKDSYSFDVADEGLAESYALHRAAYQRIFERLGLDYRIVAATAGAMGGSKSEEFLAPAEAGEDTFADCPNCDYAANTEAITFRLTPVDATDVPAAEDIPTPDTPTIETLAASLGVEASATLKNLLVKVDGEIVAVGVPGDREVDMDKVEAHFAPAAVELVTAEDFVGRPDLVRGYVGPQGLGEKVTYIADPRVAPGTAWITGANKADTHAKNVVAGRDFEVDTYVDVVVVREGDPCPNCGTGLKLDRAIEIGHIFQLGRKYADALKLDVLGQNGKPARVTMGSYGIGVSRAVAALAEQHADDKGLVWSKEVAPADVHVVAAGKALQTELALEVSDKLAAAGVRVLVDDRAGVSPGVKFTDAELIGVPQILVAGRRSGEGVVELKDRRTGEREEVTVEEALTRLTS.

The protein belongs to the class-II aminoacyl-tRNA synthetase family. ProS type 1 subfamily. As to quaternary structure, homodimer.

It is found in the cytoplasm. It carries out the reaction tRNA(Pro) + L-proline + ATP = L-prolyl-tRNA(Pro) + AMP + diphosphate. Catalyzes the attachment of proline to tRNA(Pro) in a two-step reaction: proline is first activated by ATP to form Pro-AMP and then transferred to the acceptor end of tRNA(Pro). As ProRS can inadvertently accommodate and process non-cognate amino acids such as alanine and cysteine, to avoid such errors it has two additional distinct editing activities against alanine. One activity is designated as 'pretransfer' editing and involves the tRNA(Pro)-independent hydrolysis of activated Ala-AMP. The other activity is designated 'posttransfer' editing and involves deacylation of mischarged Ala-tRNA(Pro). The misacylated Cys-tRNA(Pro) is not edited by ProRS. In Streptomyces coelicolor (strain ATCC BAA-471 / A3(2) / M145), this protein is Proline--tRNA ligase.